The primary structure comprises 89 residues: Toxin To14 (89 aa).

The first 19 residues, 1-19, serve as a signal peptide directing secretion; sequence MNCLMLIFVVFLLAFGVEC. The 65-residue stretch at 21–85 folds into the LCN-type CS-alpha/beta domain; the sequence is KDDYPVDTAK…SPTKTSGRCN (65 aa). 4 disulfide bridges follow: Cys33–Cys84, Cys37–Cys60, Cys46–Cys67, and Cys50–Cys69.

Expressed by the venom gland.

It localises to the secreted. Its function is as follows. Inhibits voltage-gated sodium channels (Nav). The chain is Toxin To14 from Tityus obscurus (Amazonian scorpion).